A 422-amino-acid polypeptide reads, in one-letter code: Cyclin-A2 (422 aa).

An N-acetylmethionine modification is found at Met-1. The interval Met-1–Arg-62 is disordered. At Ser-5 the chain carries Phosphoserine.

It belongs to the cyclin family. Cyclin AB subfamily. In terms of assembly, interacts with the CDK1 and CDK2 protein kinases to form serine/threonine kinase holoenzyme complexes. Interacts with CDK1 (hyperphosphorylated form in G1 and underphosphorylated forms in S and G2). Interacts with CDK2; the interaction increases from G1 to G2. Interacts (associated with CDK2 but not with CDK1) with SCAPER; regulates the activity of CCNA2/CDK2 by transiently maintaining CCNA2 in the cytoplasm. Forms a ternary complex with CDK2 and CDKN1B; CDKN1B inhibits the kinase activity of CDK2 through conformational rearrangements. Interacts with INCA1. As to quaternary structure, (Microbial infection) Interacts with mouse cytomegalovirus/MCMV kinase M97; this interaction sequesters CCNA2 to the cytoplasm. Post-translationally, polyubiquitinated via 'Lys-11'-linked ubiquitin by the anaphase-promoting complex (APC/C), leading to its degradation by the proteasome. Deubiquitinated and stabilized by USP37 enables entry into S phase. Ubiquitinated during the G1 phase by the SCF(FBXO31) complex, leading to its proteasomal degradation. As to expression, ubiquitous. In the testis, expressed in germ cells and in the ovary, in both germline and somatic cells.

The protein localises to the nucleus. The protein resides in the cytoplasm. In terms of biological role, cyclin which controls both the G1/S and the G2/M transition phases of the cell cycle. Functions through the formation of specific serine/threonine kinase holoenzyme complexes with the cyclin-dependent protein kinases CDK1 and CDK2. The cyclin subunit confers the substrate specificity of these complexes and differentially interacts with and activates CDK1 and CDK2 throughout the cell cycle. This chain is Cyclin-A2, found in Mus musculus (Mouse).